A 199-amino-acid polypeptide reads, in one-letter code: Superoxide dismutase [Cu-Zn] (199 aa).

An N-terminal signal peptide occupies residues 1–22 (MKLTKVALFSLGLFGFSSMALA). Residues His-92, His-94, and His-117 each coordinate Cu cation. Cys-99 and Cys-195 are disulfide-bonded. His-117, His-126, His-135, and Asp-138 together coordinate Zn(2+). A Cu cation-binding site is contributed by His-173.

It belongs to the Cu-Zn superoxide dismutase family. Homodimer. Requires Cu cation as cofactor. Zn(2+) serves as cofactor.

It localises to the periplasm. The catalysed reaction is 2 superoxide + 2 H(+) = H2O2 + O2. Its function is as follows. Destroys radicals which are normally produced within the cells and which are toxic to biological systems. May play a role in the interactive biology of organisms with their hosts and so contribute to their capacity to cause disease. This is Superoxide dismutase [Cu-Zn] (sodC) from Haemophilus ducreyi (strain 35000HP / ATCC 700724).